The following is a 421-amino-acid chain: UDP-N-acetylglucosamine 1-carboxyvinyltransferase (421 aa).

22-23 (KN) is a phosphoenolpyruvate binding site. Position 94 (R94) interacts with UDP-N-acetyl-alpha-D-glucosamine. The Proton donor role is filled by C118. A 2-(S-cysteinyl)pyruvic acid O-phosphothioketal modification is found at C118. Residues 163-166 (KVSV), D308, and I330 each bind UDP-N-acetyl-alpha-D-glucosamine.

This sequence belongs to the EPSP synthase family. MurA subfamily.

It localises to the cytoplasm. The catalysed reaction is phosphoenolpyruvate + UDP-N-acetyl-alpha-D-glucosamine = UDP-N-acetyl-3-O-(1-carboxyvinyl)-alpha-D-glucosamine + phosphate. Its pathway is cell wall biogenesis; peptidoglycan biosynthesis. Functionally, cell wall formation. Adds enolpyruvyl to UDP-N-acetylglucosamine. This chain is UDP-N-acetylglucosamine 1-carboxyvinyltransferase, found in Orientia tsutsugamushi (strain Ikeda) (Rickettsia tsutsugamushi).